The chain runs to 220 residues: Transmembrane emp24 domain-containing protein 1 (220 aa).

The first 19 residues, 1 to 19 (MAWSSSFLFIVLPLAAAVA), serve as a signal peptide directing secretion. At 20-187 (VQPQDTELTF…LQDSNLERVN (168 aa)) the chain is on the extracellular side. Positions 36 to 118 (QECFYQTTLY…EKLVFFELIF (83 aa)) constitute a GOLD domain. Residues 138 to 164 (ELLDIKLEDIKESIESVKSRLERSIQM) adopt a coiled-coil conformation. Residues 188-208 (FWSAINVGVLVTVAFLQVYML) form a helical membrane-spanning segment. Over 209 to 220 (KSLFDDKRKIRT) the chain is Cytoplasmic. Positions 211–212 (LF) match the COPII vesicle coat-binding motif. The COPI vesicle coat-binding signature appears at 211–220 (LFDDKRKIRT).

Belongs to the EMP24/GP25L family. Homodimer in endoplasmic reticulum, endoplasmic reticulum-Golgi intermediate compartment and cis-Golgi network. Interacts with IL1RL1. Interacts with RNF26; this interaction is important to modulate innate immune signaling through the cGAS-STING pathway.

The protein localises to the cell membrane. The protein resides in the endoplasmic reticulum membrane. It localises to the golgi apparatus. It is found in the cis-Golgi network membrane. Its subcellular location is the endoplasmic reticulum-Golgi intermediate compartment membrane. In terms of biological role, potential role in vesicular protein trafficking, mainly in the early secretory pathway. May act as a cargo receptor at the lumenal side for incorporation of secretory cargo molecules into transport vesicles and may be involved in vesicle coat formation at the cytoplasmic side. Plays a positive role in IL-33-mediated IL-8 and IL-6 production by interacting with interleukin-33 receptor IL1RL1. Plays also a role in the modulation of innate immune signaling through the cGAS-STING pathway by interacting with RNF26. This Xenopus tropicalis (Western clawed frog) protein is Transmembrane emp24 domain-containing protein 1 (tmed1).